The primary structure comprises 266 residues: Lectin 7 (266 aa).

The N-terminal stretch at 1–27 (MAINTSRTQILFITIISFLILAQNVNS) is a signal peptide. N-linked (GlcNAc...) asparagine glycans are attached at residues Asn121, Asn205, and Asn219.

This sequence belongs to the leguminous lectin family.

Functionally, may be involved in arbuscular mycorrhizal (AM) symbiosis with AM fungi. The sequence is that of Lectin 7 from Medicago truncatula (Barrel medic).